The sequence spans 385 residues: UPF0284 protein P9215_05181 (385 aa).

This sequence belongs to the UPF0284 family.

This chain is UPF0284 protein P9215_05181, found in Prochlorococcus marinus (strain MIT 9215).